Consider the following 263-residue polypeptide: Acetylglutamate kinase (263 aa).

Substrate contacts are provided by residues 48–49 (GG), arginine 70, and asparagine 162.

It belongs to the acetylglutamate kinase family. ArgB subfamily.

The protein resides in the cytoplasm. It carries out the reaction N-acetyl-L-glutamate + ATP = N-acetyl-L-glutamyl 5-phosphate + ADP. It functions in the pathway amino-acid biosynthesis; L-arginine biosynthesis; N(2)-acetyl-L-ornithine from L-glutamate: step 2/4. In terms of biological role, catalyzes the ATP-dependent phosphorylation of N-acetyl-L-glutamate. The sequence is that of Acetylglutamate kinase from Vibrio campbellii (strain ATCC BAA-1116).